The chain runs to 323 residues: tRNA dimethylallyltransferase (323 aa).

12–19 contributes to the ATP binding site; sequence GPTAAGKT. 14–19 serves as a coordination point for substrate; it reads TAAGKT. 2 interaction with substrate tRNA regions span residues 37 to 40 and 161 to 165; these read DSAL and QRLIR.

It belongs to the IPP transferase family. As to quaternary structure, monomer. Mg(2+) serves as cofactor.

The enzyme catalyses adenosine(37) in tRNA + dimethylallyl diphosphate = N(6)-dimethylallyladenosine(37) in tRNA + diphosphate. Catalyzes the transfer of a dimethylallyl group onto the adenine at position 37 in tRNAs that read codons beginning with uridine, leading to the formation of N6-(dimethylallyl)adenosine (i(6)A). The protein is tRNA dimethylallyltransferase of Pseudomonas putida (strain ATCC 47054 / DSM 6125 / CFBP 8728 / NCIMB 11950 / KT2440).